A 344-amino-acid polypeptide reads, in one-letter code: tRNA N6-adenosine threonylcarbamoyltransferase (344 aa).

Fe cation contacts are provided by His111 and His115. Substrate contacts are provided by residues 134 to 138 (LVSGG), Asp167, Gly180, and Asn273. Asp301 contacts Fe cation.

Belongs to the KAE1 / TsaD family. Fe(2+) serves as cofactor.

It localises to the cytoplasm. It carries out the reaction L-threonylcarbamoyladenylate + adenosine(37) in tRNA = N(6)-L-threonylcarbamoyladenosine(37) in tRNA + AMP + H(+). Required for the formation of a threonylcarbamoyl group on adenosine at position 37 (t(6)A37) in tRNAs that read codons beginning with adenine. Is involved in the transfer of the threonylcarbamoyl moiety of threonylcarbamoyl-AMP (TC-AMP) to the N6 group of A37, together with TsaE and TsaB. TsaD likely plays a direct catalytic role in this reaction. The sequence is that of tRNA N6-adenosine threonylcarbamoyltransferase from Cupriavidus taiwanensis (strain DSM 17343 / BCRC 17206 / CCUG 44338 / CIP 107171 / LMG 19424 / R1) (Ralstonia taiwanensis (strain LMG 19424)).